Here is a 172-residue protein sequence, read N- to C-terminus: Stellate protein CG33239/CG33241 (172 aa).

Belongs to the casein kinase 2 subunit beta family. In terms of assembly, interacts in vitro with the casein kinase 2 alpha subunit (CkII-alpha). The relevance of such interaction is however unclear in vivo. As to expression, probably not expressed in wild-type flies. In males lacking the Y chromosome, it is testis-specific and constitutes the main component of star-shaped crystals.

In terms of biological role, unknown. In males lacking the Y chromosome, its strong overexpression leads to the appearance of proteinaceous star-shaped crystals in the primary spermatocytes causing meiotic drive, possibly by interfering with normal casein kinase 2 activity. This Drosophila melanogaster (Fruit fly) protein is Stellate protein CG33239/CG33241 (Ste:CG33239).